A 473-amino-acid chain; its full sequence is Nuclear distribution protein PAC1 (473 aa).

Residues 9–41 enclose the LisH domain; that stretch reads QAEELHKSIIAYFLSAKLPKSAAALREEIADSV. Positions 60–87 form a coiled coil; that stretch reads TSVVRLQKKIMDLEARNSALQSELDSAT. Polar residues predominate over residues 80 to 93; that stretch reads QSELDSATPTSLSR. Residues 80–99 form a disordered region; the sequence is QSELDSATPTSLSRRNQDPV. WD repeat units follow at residues 113–154, 156–196, 200–247, 250–289, 292–352, 354–393, 397–434, and 435–472; these read SHRN…RTIK, HTRA…KNIR, GHDH…CVRT, GHVE…TKST, GHEH…IKTL, GHDN…KCVR, DAHA…ALSG, and VNGI…RVFA.

It belongs to the WD repeat LIS1/nudF family. As to quaternary structure, self-associates. Interacts with NDL1 and dynein.

It localises to the cytoplasm. It is found in the cytoskeleton. The protein localises to the spindle pole. Its function is as follows. Positively regulates the activity of the minus-end directed microtubule motor protein dynein. May enhance dynein-mediated microtubule sliding by targeting dynein to the microtubule plus end. Required for nuclear migration during vegetative growth as well as development. Required for retrograde early endosome (EE) transport from the hyphal tip. Required for localization of dynein to the mitotic spindle poles. Recruits additional proteins to the dynein complex at SPBs. This chain is Nuclear distribution protein PAC1, found in Ajellomyces dermatitidis (strain ER-3 / ATCC MYA-2586) (Blastomyces dermatitidis).